The sequence spans 483 residues: Malonate-semialdehyde dehydrogenase 2 (483 aa).

NAD(+) is bound by residues F152, K176, E179, R180, and S229. C284 acts as the Nucleophile in catalysis. Position 384 (E384) interacts with NAD(+).

Belongs to the aldehyde dehydrogenase family. IolA subfamily. In terms of assembly, homotetramer.

It catalyses the reaction 3-oxopropanoate + NAD(+) + CoA + H2O = hydrogencarbonate + acetyl-CoA + NADH + H(+). It carries out the reaction 2-methyl-3-oxopropanoate + NAD(+) + CoA + H2O = propanoyl-CoA + hydrogencarbonate + NADH + H(+). Its pathway is polyol metabolism; myo-inositol degradation into acetyl-CoA; acetyl-CoA from myo-inositol: step 7/7. Its function is as follows. Catalyzes the oxidation of malonate semialdehyde (MSA) and methylmalonate semialdehyde (MMSA) into acetyl-CoA and propanoyl-CoA, respectively. Is involved in a myo-inositol catabolic pathway. Bicarbonate, and not CO2, is the end-product of the enzymatic reaction. This Geobacillus thermodenitrificans (strain NG80-2) protein is Malonate-semialdehyde dehydrogenase 2.